Reading from the N-terminus, the 2227-residue chain is Genome polyprotein (2227 aa).

Short sequence motifs ((L)YPX(n)L motif) lie at residues 167–171 (YPHGL) and 200–205 (YPVWEL). The involved in P1-2A pentamerization stretch occupies residues 766–836 (MMSRIAAGDL…PRKMKGLFSQ (71 aa)). The chain crosses the membrane as a helical span at residues 1011–1031 (TVEIINTVLCFVKSGILLYVI). Residues 1043–1070 (IGLLRVMNYADIGCSVISCGKVFSKMLE) are membrane-penetrating ability. Residues 1127–1152 (KKKDILNILKDNQQKIEKAIEEADNF) adopt a coiled-coil conformation. One can recognise an SF3 helicase domain in the interval 1204-1366 (HQKLKNLGSI…SFFKNPHNDM (163 aa)). 1230–1237 (GKRGGGKS) contributes to the ATP binding site. The chain crosses the membrane as a helical span at residues 1462 to 1482 (WVAVGAAVGILGVLVGGWFVY). Tyr-1499 is subject to O-(5'-phospho-RNA)-tyrosine. One can recognise a Peptidase C3 domain in the interval 1514–1728 (DPVESQSTLE…VAKLVTQEMF (215 aa)). Residues His-1563, Asp-1603, and Cys-1691 each act as for protease 3C activity in the active site. Residues 1976 to 2097 (DVGLDLDFSA…VFSRDVQIDN (122 aa)) form the RdRp catalytic domain.

This sequence belongs to the picornaviridae polyprotein family. Homodimer. Homomultimer; probably interacts with membranes in a multimeric form. Seems to assemble into amyloid-like fibers. In terms of assembly, homodimer. Monomer. Interacts with protein 3CD. As to quaternary structure, interacts with host ACBD3. Interacts with protein 3AB. In terms of assembly, interacts with human MAVS. As to quaternary structure, homodimer; disulfide-linked. Homopentamer. Homooligomer. In terms of assembly, interacts with capsid protein VP2. Interacts with capsid protein VP3. As to quaternary structure, interacts with capsid protein VP1. Interacts with capsid protein VP3. Interacts with capsid protein VP1. Interacts with capsid protein VP2. In terms of processing, specific enzymatic cleavages by viral protease in vivo yield a variety of precursors and mature proteins. Polyprotein processing intermediates are produced, such as P1-2A which is a functional precursor of the structural proteins, VP0 which is a VP4-VP2 precursor, VP1-2A precursor, 3ABC precursor which is a stable and catalytically active precursor of 3A, 3B and 3C proteins, 3AB and 3CD precursors. The assembly signal 2A is removed from VP1-2A by a host protease, possibly host Cathepsin L. This cleavage occurs over a region of 3 amino-acids probably generating VP1 proteins with heterogeneous C-termini. Post-translationally, during virion maturation, immature virions are rendered infectious following cleavage of VP0 into VP4 and VP2. This maturation seems to be an autocatalytic event triggered by the presence of RNA in the capsid and is followed by a conformational change of the particle. The assembly signal 2A is removed from VP1-2A by a host protease, possibly host Cathepsin L in naked virions. This cleavage does not occur in enveloped virions. This cleavage occurs over a region of 3 amino-acids probably generating VP1 proteins with heterogeneous C-termini. In terms of processing, VPg is uridylylated prior to priming replication into VPg-pUpU. Post-translationally, unlike other picornaviruses, does not seem to be myristoylated.

It is found in the virion. Its subcellular location is the host endosome. It localises to the host multivesicular body. The protein localises to the host membrane. The protein resides in the host mitochondrion outer membrane. It is found in the host cytoplasm. Its subcellular location is the host cytoplasmic vesicle membrane. It catalyses the reaction RNA(n) + a ribonucleoside 5'-triphosphate = RNA(n+1) + diphosphate. It carries out the reaction a ribonucleoside 5'-triphosphate + H2O = a ribonucleoside 5'-diphosphate + phosphate + H(+). The catalysed reaction is Selective cleavage of Gln-|-Gly bond in the poliovirus polyprotein. In other picornavirus reactions Glu may be substituted for Gln, and Ser or Thr for Gly.. Functionally, capsid proteins VP1, VP2, and VP3 form a closed capsid enclosing the viral positive strand RNA genome. All these proteins contain a beta-sheet structure called beta-barrel jelly roll. Together they form an icosahedral capsid (T=3) composed of 60 copies of each VP1, VP2, and VP3, with a diameter of approximately 300 Angstroms. VP1 is situated at the 12 fivefold axes, whereas VP2 and VP3 are located at the quasi-sixfold axes. The naked capsid interacts with the host receptor HAVCR1 to provide virion attachment to and probably entry into the target cell. VP0 precursor is a component of the immature procapsids. In terms of biological role, plays a role in the assembly of the 12 pentamers into an icosahedral structure. Has not been detected in mature virions, supposedly owing to its small size. Its function is as follows. Precursor component of immature procapsids that corresponds to an extended form of the structural protein VP1. After maturation, possibly by the host Cathepsin L, the assembly signal 2A is cleaved to give rise to the mature VP1 protein. Functionally, functions as a viroporin. Affects membrane integrity and causes an increase in membrane permeability. Involved in host intracellular membrane rearrangements probably to give rise to the viral factories. Does not disrupt calcium homeostasis or glycoprotein trafficking. Antagonizes the innate immune response of the host by suppressing IFN-beta synthesis, which it achieves by interfering with the RIG-I/IFIH1 pathway. Affects membrane integrity and causes an increase in membrane permeability. In terms of biological role, associates with and induces structural rearrangements of intracellular membranes. Displays RNA-binding activity. Its function is as follows. The precursor 3ABC is targeted to the mitochondrial membrane where protease 3C activity cleaves and inhibits the host antiviral protein MAVS, thereby disrupting activation of IRF3 through the IFIH1/MDA5 pathway. In vivo, the protease activity of 3ABC precursor is more efficient in cleaving the 2BC precursor than that of protein 3C. The 3ABC precursor may therefore play a role in the proteolytic processing of the polyprotein. Possible viroporin. Functionally, interacts with the 3CD precursor and with RNA structures found at both the 5'- and 3'-termini of the viral genome. Since the 3AB precursor contains the hydrophobic domain 3A, it probably anchors the whole viral replicase complex to intracellular membranes on which viral RNA synthesis occurs. May serve as membrane anchor to the 3AB and 3ABC precursors via its hydrophobic domain. May interact with RNA. In terms of biological role, acts as a primer for viral RNA replication and remains covalently bound to viral genomic RNA. VPg is uridylylated prior to priming replication into VPg-pUpU. The VPg-pUpU is then used as primer on the genomic RNA poly(A) by the RNA-dependent RNA polymerase to replicate the viral genome. Its function is as follows. Cysteine protease that generates mature viral proteins from the precursor polyprotein. In addition to its proteolytic activity, it binds to viral RNA, and thus influences viral genome replication. RNA and substrate bind cooperatively to the protease. Cleaves IKBKG/NEMO to impair innate immune signaling. Cleaves host PABPC1 which may participate in the switch of viral translation to RNA synthesis. Functionally, interacts with the 3AB precursor and with RNA structures found at both the 5'- and 3'-termini of the viral genome. Disrupts TLR3 signaling by degrading the host adapter protein TICAM1/TRIF. RNA-directed RNA polymerase 3D-POL replicates genomic and antigenomic RNA by recognizing replications specific signals. This is Genome polyprotein from Cercopithecus hamlyni (Owl-faced monkey).